The sequence spans 490 residues: Betaine aldehyde dehydrogenase (490 aa).

Positions 27 and 93 each coordinate K(+). Gly-150–Trp-152 serves as a coordination point for NAD(+). Lys-162 acts as the Charge relay system in catalysis. Lys-176–Glu-179 provides a ligand contact to NAD(+). Val-180 provides a ligand contact to K(+). An NAD(+)-binding site is contributed by Gly-230 to Thr-233. Leu-246 is a K(+) binding site. Catalysis depends on Glu-252, which acts as the Proton acceptor. Residues Gly-254, Cys-286, and Glu-387 each contribute to the NAD(+) site. Cys-286 (nucleophile) is an active-site residue. At Cys-286 the chain carries Cysteine sulfenic acid (-SOH). Residues Lys-457 and Gly-460 each contribute to the K(+) site. Glu-464 serves as the catalytic Charge relay system.

It belongs to the aldehyde dehydrogenase family. Dimer of dimers. Requires K(+) as cofactor.

The catalysed reaction is betaine aldehyde + NAD(+) + H2O = glycine betaine + NADH + 2 H(+). Its pathway is amine and polyamine biosynthesis; betaine biosynthesis via choline pathway; betaine from betaine aldehyde: step 1/1. In terms of biological role, involved in the biosynthesis of the osmoprotectant glycine betaine. Catalyzes the irreversible oxidation of betaine aldehyde to the corresponding acid. In Pseudomonas fluorescens (strain Pf0-1), this protein is Betaine aldehyde dehydrogenase.